The sequence spans 96 residues: Large ribosomal subunit protein bL28 (96 aa).

It belongs to the bacterial ribosomal protein bL28 family.

In Methylocella silvestris (strain DSM 15510 / CIP 108128 / LMG 27833 / NCIMB 13906 / BL2), this protein is Large ribosomal subunit protein bL28.